The sequence spans 275 residues: Hydroxyethylthiazole kinase (275 aa).

Position 50 (Met-50) interacts with substrate. ATP is bound by residues Arg-126 and Ser-171. Ala-200 serves as a coordination point for substrate.

The protein belongs to the Thz kinase family. Mg(2+) is required as a cofactor.

The catalysed reaction is 5-(2-hydroxyethyl)-4-methylthiazole + ATP = 4-methyl-5-(2-phosphooxyethyl)-thiazole + ADP + H(+). The protein operates within cofactor biosynthesis; thiamine diphosphate biosynthesis; 4-methyl-5-(2-phosphoethyl)-thiazole from 5-(2-hydroxyethyl)-4-methylthiazole: step 1/1. Its function is as follows. Catalyzes the phosphorylation of the hydroxyl group of 4-methyl-5-beta-hydroxyethylthiazole (THZ). This is Hydroxyethylthiazole kinase from Acinetobacter baumannii (strain ATCC 17978 / DSM 105126 / CIP 53.77 / LMG 1025 / NCDC KC755 / 5377).